We begin with the raw amino-acid sequence, 158 residues long: Succinate dehydrogenase [ubiquinone] cytochrome b small subunit, mitochondrial (158 aa).

A mitochondrion-targeting transit peptide spans 1-55 (MALWRLSVLCGAREGRALFLRTPVVRPALVSAFLQDRPAQGWCGTQHIHLSPSHH). Residues 56–62 (SGSKAAS) are Mitochondrial matrix-facing. Residues 63–84 (LHWTGERVVSVLLLGLIPAAYL) traverse the membrane as a helical segment. Residues 85 to 89 (NPCSA) are Mitochondrial intermembrane-facing. The helical transmembrane segment at 90–110 (MDYSLAATLTLHSHWGIGQVV) threads the bilayer. His101 provides a ligand contact to heme b. The Mitochondrial matrix portion of the chain corresponds to 111–119 (TDYVHGDAV). An a ubiquinone-binding site is contributed by Tyr113. A helical membrane pass occupies residues 120–141 (QKAAKTGLLVLSAFTFAGLCYF). At 142 to 158 (NYHDVGICKAVAMLWKL) the chain is on the mitochondrial intermembrane side.

Belongs to the CybS family. In terms of assembly, component of complex II composed of four subunits: the flavoprotein (FP) SDHA, iron-sulfur protein (IP) SDHB, and a cytochrome b560 composed of SDHC and SDHD.

It localises to the mitochondrion inner membrane. Its pathway is carbohydrate metabolism; tricarboxylic acid cycle. Its function is as follows. Membrane-anchoring subunit of succinate dehydrogenase (SDH) that is involved in complex II of the mitochondrial electron transport chain and is responsible for transferring electrons from succinate to ubiquinone (coenzyme Q). SDH also oxidizes malate to the non-canonical enol form of oxaloacetate, enol-oxaloacetate. Enol-oxaloacetate, which is a potent inhibitor of the succinate dehydrogenase activity, is further isomerized into keto-oxaloacetate. The protein is Succinate dehydrogenase [ubiquinone] cytochrome b small subunit, mitochondrial (SDHD) of Bos taurus (Bovine).